The sequence spans 581 residues: MKATLLPSLLALSLTLCLALGLSSSGVLVRADAFASSQPPVVSDPVLASQHLTQANVALQSGRYQDALSAFDLALQADPSSWLTYYRRATAQLSLGRTSAALQDFQSLLKLNPKFDKAYLQQAKVYLKEGDCDKAKQALKTYDSIRAEKGAANSSPAEANSVRSKLTLVETSIKSLGQLVKELDKAQKADKKGKAKELDSTKVDHCIHLAGEVLKISPSHLETRLVRARCQTMKGRIEDAMADWTRAVHLTPSPFLLRRLSVLSYFVVSEPGSQSRDAGLQHLKACLHSDPDNKSCAKMHRKIKALEKSLKKARNFYNSQSYRAVLSALKGGKVGRATVVDDIKEAIRSATEVQSGDEEPLIPSTYKGDPVQESGLLLELHTMYCKAYTELNDMDKAMPYCELVLAKDPDNVEATLARAELALQREDYDQAVRDLTKAFDASGRTDRAIHQKLQTAQKRLKLSQSKDYYKVLGVKRTDSLATIKKAYRKMARENHPDKGGSQEKMAQINEAWGVLGDEELRKKYDQGDDPNDPMGGQQGGYGNPFAQGGHPFDMFFQQQAGFGGFPGGGFPGGQQFHFKMG.

A signal peptide spans 1–19 (MKATLLPSLLALSLTLCLA). 7 TPR repeats span residues 48–81 (ASQH…DPSS), 82–115 (WLTY…NPKF), 116–149 (DKAY…RAEK), 221–254 (LETR…TPSP), 257–293 (LRRL…DPDN), 378–411 (LELH…DPDN), and 412–445 (VEAT…SGRT). An N-linked (GlcNAc...) asparagine glycan is attached at Asn293. Residues 467–528 (DYYKVLGVKR…ELRKKYDQGD (62 aa)) form the J domain. The interval 522-544 (KKYDQGDDPNDPMGGQQGGYGNP) is disordered.

As to quaternary structure, interacts with the ER chaperone BIP1.

Its subcellular location is the endoplasmic reticulum lumen. Endoplasmic reticulum (ER) protein that functions as a co-chaperone for BIP1 during ER stress. Might be specifically involved in the refolding of N-glycosylated proteins. In Mycosarcoma maydis (Corn smut fungus), this protein is Tetratricopeptide repeat and J domain-containing co-chaperone DNJ1.